Reading from the N-terminus, the 99-residue chain is Large ribosomal subunit protein uL23 (99 aa).

The protein belongs to the universal ribosomal protein uL23 family. In terms of assembly, part of the 50S ribosomal subunit. Contacts protein L29, and trigger factor when it is bound to the ribosome.

One of the early assembly proteins it binds 23S rRNA. One of the proteins that surrounds the polypeptide exit tunnel on the outside of the ribosome. Forms the main docking site for trigger factor binding to the ribosome. The protein is Large ribosomal subunit protein uL23 of Pseudomonas fluorescens (strain SBW25).